A 236-amino-acid polypeptide reads, in one-letter code: Orotidine 5'-phosphate decarboxylase (236 aa).

Substrate-binding positions include D16, K38, 65–74 (DLKLHDIGNT), T123, R184, Q193, G213, and R214. K67 acts as the Proton donor in catalysis.

The protein belongs to the OMP decarboxylase family. Type 1 subfamily. As to quaternary structure, homodimer.

The catalysed reaction is orotidine 5'-phosphate + H(+) = UMP + CO2. Its pathway is pyrimidine metabolism; UMP biosynthesis via de novo pathway; UMP from orotate: step 2/2. Catalyzes the decarboxylation of orotidine 5'-monophosphate (OMP) to uridine 5'-monophosphate (UMP). The sequence is that of Orotidine 5'-phosphate decarboxylase from Methylobacterium nodulans (strain LMG 21967 / CNCM I-2342 / ORS 2060).